The primary structure comprises 98 residues: Protein E7 (98 aa).

Positions 1 to 40 (MRGETPTLQDYVLDLQPEATDLHCYEQLPDSSDEEDVIDS) are E7 terminal domain. Positions 22–26 (LHCYE) match the LXCXE motif; interaction with host RB1 and TMEM173/STING motif. A zinc finger lies at 58–94 (CCQCKSTLRLCVQSTQVDIRILQELLMGSFGIVCPNC). A Nuclear export signal motif is present at residues 76–84 (IRILQELLM).

This sequence belongs to the papillomaviridae E7 protein family. Homodimer. Homooligomer. Interacts with host RB1; this interaction induces dissociation of RB1-E2F1 complex thereby disrupting RB1 activity. Interacts with host EP300; this interaction represses EP300 transcriptional activity. Interacts with protein E2; this interaction inhibits E7 oncogenic activity. Interacts with host TMEM173/STING; this interaction impairs the ability of TMEM173/STING to sense cytosolic DNA and promote the production of type I interferon (IFN-alpha and IFN-beta). Post-translationally, highly phosphorylated.

The protein resides in the host cytoplasm. It is found in the host nucleus. Functionally, E7 protein has both transforming and trans-activating activities. Disrupts the function of host retinoblastoma protein RB1/pRb, which is a key regulator of the cell cycle. Induces the disassembly of the E2F1 transcription factors from RB1, with subsequent transcriptional activation of E2F1-regulated S-phase genes. Inactivation of the ability of RB1 to arrest the cell cycle is critical for cellular transformation, uncontrolled cellular growth and proliferation induced by viral infection. Stimulation of progression from G1 to S phase allows the virus to efficiently use the cellular DNA replicating machinery to achieve viral genome replication. Interferes with histone deacetylation mediated by HDAC1 and HDAC2, leading to activation of transcription. Its function is as follows. Plays a role in viral genome replication by driving entry of quiescent cells into the cell cycle. Stimulation of progression from G1 to S phase allows the virus to efficiently use the cellular DNA replicating machinery to achieve viral genome replication. E7 protein has both transforming and trans-activating activities. Induces the disassembly of the E2F1 transcription factor from RB1, with subsequent transcriptional activation of E2F1-regulated S-phase genes. Interferes with host histone deacetylation mediated by HDAC1 and HDAC2, leading to transcription activation. Also plays a role in the inhibition of both antiviral and antiproliferative functions of host interferon alpha. Interaction with host TMEM173/STING impairs the ability of TMEM173/STING to sense cytosolic DNA and promote the production of type I interferon (IFN-alpha and IFN-beta). The polypeptide is Protein E7 (Homo sapiens (Human)).